The chain runs to 216 residues: Somatotropin (216 aa).

The N-terminal stretch at 1-26 is a signal peptide; the sequence is MAADPQSSVLLAFALLCLPWPQEVGA. Residue His45 coordinates Zn(2+). The cysteines at positions 78 and 189 are disulfide-linked. Ser131 is modified (phosphoserine). Residue Glu198 coordinates Zn(2+). The cysteines at positions 206 and 214 are disulfide-linked.

The protein belongs to the somatotropin/prolactin family.

It localises to the secreted. In terms of biological role, plays an important role in growth control. Its major role in stimulating body growth is to stimulate the liver and other tissues to secrete IGF1. It stimulates both the differentiation and proliferation of myoblasts. It also stimulates amino acid uptake and protein synthesis in muscle and other tissues. This chain is Somatotropin (GH1), found in Ailuropoda melanoleuca (Giant panda).